The primary structure comprises 66 residues: Beta-toxin Chui3 (66 aa).

Residues 1-66 (KEGYLVELGT…VWPLKNKTCR (66 aa)) form the LCN-type CS-alpha/beta domain. 4 disulfide bridges follow: C12–C65, C16–C41, C25–C46, and C29–C48.

The protein belongs to the long (4 C-C) scorpion toxin superfamily. Sodium channel inhibitor family. Beta subfamily. Expressed by the venom gland.

Its subcellular location is the secreted. In terms of biological role, beta toxins bind voltage-independently at site-4 of sodium channels (Nav) and shift the voltage of activation toward more negative potentials thereby affecting sodium channel activation and promoting spontaneous and repetitive firing. Acts on human sodium channel Nav1.6/SCN8A. This Centruroides huichol (Scorpion) protein is Beta-toxin Chui3.